Here is a 451-residue protein sequence, read N- to C-terminus: 3-phosphoshikimate 1-carboxyvinyltransferase (451 aa).

3-phosphoshikimate contacts are provided by K30, S31, and R35. K30 contacts phosphoenolpyruvate. Phosphoenolpyruvate is bound by residues G103 and R131. S176, Q178, D329, and K356 together coordinate 3-phosphoshikimate. Q178 serves as a coordination point for phosphoenolpyruvate. The Proton acceptor role is filled by D329. R360 and R404 together coordinate phosphoenolpyruvate.

It belongs to the EPSP synthase family. Monomer.

The protein resides in the cytoplasm. It carries out the reaction 3-phosphoshikimate + phosphoenolpyruvate = 5-O-(1-carboxyvinyl)-3-phosphoshikimate + phosphate. Its pathway is metabolic intermediate biosynthesis; chorismate biosynthesis; chorismate from D-erythrose 4-phosphate and phosphoenolpyruvate: step 6/7. Its function is as follows. Catalyzes the transfer of the enolpyruvyl moiety of phosphoenolpyruvate (PEP) to the 5-hydroxyl of shikimate-3-phosphate (S3P) to produce enolpyruvyl shikimate-3-phosphate and inorganic phosphate. The sequence is that of 3-phosphoshikimate 1-carboxyvinyltransferase from Parvibaculum lavamentivorans (strain DS-1 / DSM 13023 / NCIMB 13966).